Reading from the N-terminus, the 61-residue chain is Large ribosomal subunit protein uL30 (61 aa).

Belongs to the universal ribosomal protein uL30 family. As to quaternary structure, part of the 50S ribosomal subunit.

The sequence is that of Large ribosomal subunit protein uL30 from Francisella tularensis subsp. tularensis (strain FSC 198).